Reading from the N-terminus, the 375-residue chain is Platelet-derived growth factor receptor-like protein (375 aa).

The signal sequence occupies residues 1–21 (MKVWLLLGLLLVHEALEDVTG). The interval 22–64 (QHLPKNKRPKEPGENRIKPTNKKVKPKIPKMKDRDSANSAPKT) is disordered. Positions 40–50 (PTNKKVKPKIP) are enriched in basic residues. Residues 62–159 (PKTQSIMMQV…GYICRKDEAK (98 aa)) form the Ig-like C2-type 1 domain. Cysteines 96 and 143 form a disulfide. 2 N-linked (GlcNAc...) asparagine glycosylation sites follow: N132 and N219. One can recognise an Ig-like C2-type 2 domain in the interval 272–375 (PSTTILASSN…TTVATTVEFS (104 aa)). C293 and C357 form a disulfide bridge.

Forms a complex composed of PDGFRL, TNK2 and GRB2. In terms of tissue distribution, expressed in colon, lung and liver.

Its subcellular location is the secreted. This chain is Platelet-derived growth factor receptor-like protein (PDGFRL), found in Homo sapiens (Human).